Reading from the N-terminus, the 343-residue chain is General stress protein 30 (343 aa).

This sequence belongs to the polysaccharide pyruvyl transferase family.

This Bacillus subtilis (strain 168) protein is General stress protein 30 (yxaB).